The sequence spans 412 residues: Peptide chain release factor subunit 1 (412 aa).

The protein belongs to the eukaryotic release factor 1 family. Heterodimer of two subunits, one of which binds GTP.

The protein localises to the cytoplasm. In terms of biological role, directs the termination of nascent peptide synthesis (translation) in response to the termination codons UAA, UAG and UGA. This is Peptide chain release factor subunit 1 from Methanobrevibacter smithii (strain ATCC 35061 / DSM 861 / OCM 144 / PS).